We begin with the raw amino-acid sequence, 406 residues long: Argininosuccinate synthase (406 aa).

Residues 11 to 19 (AYSGGLDTS) and alanine 38 contribute to the ATP site. Tyrosine 91 and serine 96 together coordinate L-citrulline. Glycine 121 is a binding site for ATP. Positions 123, 127, and 128 each coordinate L-aspartate. Position 127 (asparagine 127) interacts with L-citrulline. L-citrulline-binding residues include arginine 131, serine 181, serine 190, glutamate 266, and tyrosine 278.

Belongs to the argininosuccinate synthase family. Type 1 subfamily. In terms of assembly, homotetramer.

Its subcellular location is the cytoplasm. It carries out the reaction L-citrulline + L-aspartate + ATP = 2-(N(omega)-L-arginino)succinate + AMP + diphosphate + H(+). It participates in amino-acid biosynthesis; L-arginine biosynthesis; L-arginine from L-ornithine and carbamoyl phosphate: step 2/3. The polypeptide is Argininosuccinate synthase (Campylobacter jejuni subsp. jejuni serotype O:23/36 (strain 81-176)).